A 611-amino-acid polypeptide reads, in one-letter code: Phosphomethylpyrimidine synthase (611 aa).

Substrate is bound by residues N218, M247, Y276, H312, 332–334 (SRG), 373–376 (DGLR), and E412. Residue H416 participates in Zn(2+) binding. Y439 provides a ligand contact to substrate. H480 serves as a coordination point for Zn(2+). Residues C560, C563, and C568 each contribute to the [4Fe-4S] cluster site.

It belongs to the ThiC family. Homodimer. [4Fe-4S] cluster is required as a cofactor.

It carries out the reaction 5-amino-1-(5-phospho-beta-D-ribosyl)imidazole + S-adenosyl-L-methionine = 4-amino-2-methyl-5-(phosphooxymethyl)pyrimidine + CO + 5'-deoxyadenosine + formate + L-methionine + 3 H(+). It functions in the pathway cofactor biosynthesis; thiamine diphosphate biosynthesis. In terms of biological role, catalyzes the synthesis of the hydroxymethylpyrimidine phosphate (HMP-P) moiety of thiamine from aminoimidazole ribotide (AIR) in a radical S-adenosyl-L-methionine (SAM)-dependent reaction. This Caulobacter sp. (strain K31) protein is Phosphomethylpyrimidine synthase.